We begin with the raw amino-acid sequence, 143 residues long: Endoribonuclease YbeY (143 aa).

Zn(2+) contacts are provided by histidine 106, histidine 110, and histidine 116.

Belongs to the endoribonuclease YbeY family. Zn(2+) is required as a cofactor.

Its subcellular location is the cytoplasm. In terms of biological role, single strand-specific metallo-endoribonuclease involved in late-stage 70S ribosome quality control and in maturation of the 3' terminus of the 16S rRNA. The sequence is that of Endoribonuclease YbeY from Petrotoga mobilis (strain DSM 10674 / SJ95).